Reading from the N-terminus, the 861-residue chain is Leucine--tRNA ligase (861 aa).

Residues 42-52 (PYPSGRLHMGH) carry the 'HIGH' region motif. The 'KMSKS' region signature appears at 619-623 (KMSKS). Lys622 contributes to the ATP binding site.

Belongs to the class-I aminoacyl-tRNA synthetase family.

The protein localises to the cytoplasm. It catalyses the reaction tRNA(Leu) + L-leucine + ATP = L-leucyl-tRNA(Leu) + AMP + diphosphate. This Haemophilus ducreyi (strain 35000HP / ATCC 700724) protein is Leucine--tRNA ligase.